A 348-amino-acid polypeptide reads, in one-letter code: Probable dual-specificity RNA methyltransferase RlmN (348 aa).

The Proton acceptor role is filled by Glu-93. One can recognise a Radical SAM core domain in the interval 99–333 (TEKRLTACLS…VSFRKSRGLD (235 aa)). Cysteines 106 and 338 form a disulfide. Residues Cys-113, Cys-117, and Cys-120 each contribute to the [4Fe-4S] cluster site. Residues 160-161 (GE), Ser-190, 219-221 (SLH), and Asn-295 contribute to the S-adenosyl-L-methionine site. Cys-338 (S-methylcysteine intermediate) is an active-site residue.

Belongs to the radical SAM superfamily. RlmN family. Requires [4Fe-4S] cluster as cofactor.

The protein resides in the cytoplasm. The enzyme catalyses adenosine(2503) in 23S rRNA + 2 reduced [2Fe-2S]-[ferredoxin] + 2 S-adenosyl-L-methionine = 2-methyladenosine(2503) in 23S rRNA + 5'-deoxyadenosine + L-methionine + 2 oxidized [2Fe-2S]-[ferredoxin] + S-adenosyl-L-homocysteine. It carries out the reaction adenosine(37) in tRNA + 2 reduced [2Fe-2S]-[ferredoxin] + 2 S-adenosyl-L-methionine = 2-methyladenosine(37) in tRNA + 5'-deoxyadenosine + L-methionine + 2 oxidized [2Fe-2S]-[ferredoxin] + S-adenosyl-L-homocysteine. Specifically methylates position 2 of adenine 2503 in 23S rRNA and position 2 of adenine 37 in tRNAs. The polypeptide is Probable dual-specificity RNA methyltransferase RlmN (Prochlorococcus marinus (strain MIT 9312)).